The chain runs to 288 residues: 4-diphosphocytidyl-2-C-methyl-D-erythritol kinase (288 aa).

Residue lysine 13 is part of the active site. Residue 96-106 coordinates ATP; it reads PMGGGIGGGSS. Aspartate 138 is a catalytic residue.

Belongs to the GHMP kinase family. IspE subfamily.

It carries out the reaction 4-CDP-2-C-methyl-D-erythritol + ATP = 4-CDP-2-C-methyl-D-erythritol 2-phosphate + ADP + H(+). It functions in the pathway isoprenoid biosynthesis; isopentenyl diphosphate biosynthesis via DXP pathway; isopentenyl diphosphate from 1-deoxy-D-xylulose 5-phosphate: step 3/6. Functionally, catalyzes the phosphorylation of the position 2 hydroxy group of 4-diphosphocytidyl-2C-methyl-D-erythritol. In Aliivibrio fischeri (strain ATCC 700601 / ES114) (Vibrio fischeri), this protein is 4-diphosphocytidyl-2-C-methyl-D-erythritol kinase.